The following is a 130-amino-acid chain: Ribosome biogenesis inhibitor MINAS-60 (130 aa).

A disordered region spans residues 61-130; that stretch reads SKVQRIPTRP…RRRRPVTSSC (70 aa). Residues 109–130 show a composition bias toward basic residues; it reads KGRRRRRRMRRRRRRRPVTSSC.

In terms of assembly, interacts with 60S ribosome assembly factors GTPBP4 and MRTO4.

Its subcellular location is the nucleus. The protein localises to the nucleolus. Acts as a late-stage inhibitor of pre-60S ribosome assembly by preventing pre-60S ribosome export from nucleus. This is Ribosome biogenesis inhibitor MINAS-60 from Mus musculus (Mouse).